Reading from the N-terminus, the 407-residue chain is Serpin-Z2 (407 aa).

A disordered region spans residues 1–28; sequence MDSKRKNQELSTSETADPSLSKTNKKQK. Positions 9-22 are enriched in polar residues; the sequence is ELSTSETADPSLSK. An RCL region spans residues 344–368; the sequence is GTEAAAATTVVVVTGSCLWEPKKKI.

This sequence belongs to the serpin family.

Functionally, probable serine protease inhibitor. The protein is Serpin-Z2 of Arabidopsis thaliana (Mouse-ear cress).